The primary structure comprises 488 residues: Solute carrier family 41 member 3 (488 aa).

2 stretches are compositionally biased toward basic and acidic residues: residues 1 to 19 and 27 to 36; these read MEGTEARQRRLEGCGRLKE and DAGRLPKASE. The segment at 1–36 is disordered; sequence MEGTEARQRRLEGCGRLKELGPLPSHDAGRLPKASE. The next 9 membrane-spanning stretches (helical) occupy residues 63-83, 147-167, 189-209, 220-240, 251-271, 284-304, 377-397, 406-426, and 450-470; these read LIIGFQVVIPFLLAGVGLSWA, LAVVQVQATVVGLLAAVASLM, VITAFLAALALGILMICIVIG, IATPIAASLGDLITLSILALM, WYLTPLVCVGFLALTPLWLFI, YGWFPIILAMIISSFGGLILS, VLLFLVVPGHLIFFYLICLVE, IFILLYLVAGVVQVVILLYLA, and GLGDLLGTSLLALCFFLDWLL.

Belongs to the SLC41A transporter family.

The protein localises to the mitochondrion inner membrane. It catalyses the reaction Mg(2+)(in) + 2 Na(+)(out) = Mg(2+)(out) + 2 Na(+)(in). Na(+)/Mg(2+) ion exchanger that acts as a predominant Mg(2+) efflux system at the mitochondrial inner membrane. The sequence is that of Solute carrier family 41 member 3 (Slc41a3) from Mus musculus (Mouse).